The chain runs to 252 residues: 5'-nucleotidase SurE (252 aa).

Asp-8, Asp-9, Ser-39, and Asn-91 together coordinate a divalent metal cation.

This sequence belongs to the SurE nucleotidase family. A divalent metal cation serves as cofactor.

It localises to the cytoplasm. The enzyme catalyses a ribonucleoside 5'-phosphate + H2O = a ribonucleoside + phosphate. Its function is as follows. Nucleotidase that shows phosphatase activity on nucleoside 5'-monophosphates. This Bordetella avium (strain 197N) protein is 5'-nucleotidase SurE.